The following is a 98-amino-acid chain: uncharacterized protein (98 aa).

The protein belongs to the HesB/IscA family.

This is an uncharacterized protein from Staphylococcus aureus (strain MRSA252).